Consider the following 168-residue polypeptide: Transcription antitermination protein NusB (168 aa).

Belongs to the NusB family.

In terms of biological role, involved in transcription antitermination. Required for transcription of ribosomal RNA (rRNA) genes. Binds specifically to the boxA antiterminator sequence of the ribosomal RNA (rrn) operons. This Brucella anthropi (strain ATCC 49188 / DSM 6882 / CCUG 24695 / JCM 21032 / LMG 3331 / NBRC 15819 / NCTC 12168 / Alc 37) (Ochrobactrum anthropi) protein is Transcription antitermination protein NusB.